The primary structure comprises 171 residues: 16S rRNA aminocarboxypropyltransferase (171 aa).

The S-adenosyl-L-methionine site is built by Thr18, Leu68, Leu91, and Ser110.

This sequence belongs to the TDD superfamily. TSR3 family.

Its subcellular location is the cytoplasm. The enzyme catalyses an N(1)-methylpseudouridine in rRNA + S-adenosyl-L-methionine = N(1)-methyl-N(3)-[(3S)-3-amino-3-carboxypropyl]pseudouridine in rRNA + S-methyl-5'-thioadenosine + H(+). In terms of biological role, aminocarboxypropyltransferase that catalyzes the aminocarboxypropyl transfer on pseudouridine corresponding to position 914 in M.jannaschii 16S rRNA. It constitutes the last step in biosynthesis of the hypermodified N1-methyl-N3-(3-amino-3-carboxypropyl) pseudouridine (m1acp3-Psi). The chain is 16S rRNA aminocarboxypropyltransferase from Methanosphaera stadtmanae (strain ATCC 43021 / DSM 3091 / JCM 11832 / MCB-3).